Consider the following 199-residue polypeptide: Inactive glutathione S-transferase D3 (199 aa).

One can recognise a GST N-terminal domain in the interval methionine 1–aspartate 64. Glutathione-binding positions include histidine 34–isoleucine 36 and glutamate 48–arginine 50. One can recognise a GST C-terminal domain in the interval aspartate 70–lysine 199.

This sequence belongs to the GST superfamily. Delta family. As to quaternary structure, homodimer.

Functionally, has no glutathione S-transferase activity. The protein is Inactive glutathione S-transferase D3 of Drosophila melanogaster (Fruit fly).